A 156-amino-acid polypeptide reads, in one-letter code: Hexachlorocyclohexane dehydrochlorinase 2 (156 aa).

D25 is an active-site residue. The active-site Proton acceptor is the H73.

It belongs to the HCH dehydrochlorinase family. Homotrimer.

It is found in the periplasm. The catalysed reaction is gamma-hexachlorocyclohexane = (3R,4S,5S,6R)-pentachlorocyclohexene + chloride + H(+). The enzyme catalyses (3R,4S,5S,6R)-pentachlorocyclohexene = (3R,6R)-1,3,4,6-tetrachlorocyclohexa-1,4-diene + chloride + H(+). It participates in xenobiotic degradation; hexachlorocyclohexane degradation. In terms of biological role, catalyzes the conversion of the important environmental pollutant gamma-hexachlorocyclohexane (gamma-HCH or lindane) to 1,3,4,6-tetrachloro-1,4-cyclohexadiene (1,4-TCDN) via gamma-pentachlorocyclohexene (gamma-PCCH). Proceeds by two successive 1,2-anti conformationally dependent dehydrochlorinations. Also shows activity with alpha- and delta-HCH, giving alpha- and delta-PCCH respectively, but not with the beta isomer. The protein is Hexachlorocyclohexane dehydrochlorinase 2 of Sphingobium indicum (strain DSM 16412 / CCM 7286 / MTCC 6364 / B90A).